The sequence spans 126 residues: Large ribosomal subunit protein eL28 (126 aa).

At S2 the chain carries N-acetylserine.

This sequence belongs to the eukaryotic ribosomal protein eL28 family.

This chain is Large ribosomal subunit protein eL28 (rpl-28), found in Caenorhabditis elegans.